A 289-amino-acid chain; its full sequence is LETDLDVVAINDPFIDLAYMVYMFKYDSVHGRFSGSVETKDGKLWINQKPITVFRKRDPVQIPWGSAGAEYIVESTGVFTTTEKASAHLKGGAKKIVISAPSADAPMFVCGVNLDKYDPKFQVVSNASCTTNCLAPLAKVVNDKFGIVEGLMTTVHATTATQKTVDGPSAKDWRGGRSVNNNIIPSSTGAAKAVGKVIPELNGKLTGLSFRVPTLDVSVVDLVVRIEQSATYDEIKEAFREASKGSLKGIIEYTDEHVVSTDFIGHTASSIFDSLAGIQLNANFVKLIA.

Residues D12 and R57 each contribute to the NAD(+) site. D-glyceraldehyde 3-phosphate is bound by residues S128 to T130, T159, T188 to G189, and R211. C129 serves as the catalytic Nucleophile.

It belongs to the glyceraldehyde-3-phosphate dehydrogenase family. In terms of assembly, homotetramer.

It is found in the cytoplasm. The enzyme catalyses D-glyceraldehyde 3-phosphate + phosphate + NAD(+) = (2R)-3-phospho-glyceroyl phosphate + NADH + H(+). Its pathway is carbohydrate degradation; glycolysis; pyruvate from D-glyceraldehyde 3-phosphate: step 1/5. This is Glyceraldehyde-3-phosphate dehydrogenase (GPD) from Amanita muscaria (Fly agaric).